Consider the following 409-residue polypeptide: Serine protease inhibitor 2 (409 aa).

The signal sequence occupies residues 1–21; it reads MNKLNFVILCLAALLVFDATA. 2 N-linked (GlcNAc...) asparagine glycosylation sites follow: asparagine 294 and asparagine 324. The short motif at 356 to 360 is the Hinge region; required for binding to peptidase element; it reads LGSEA.

It belongs to the serpin family. Forms a covalent heterodimer with protease CLIPB9; the interaction inhibits CLIPB9 protease activity. Forms a covalent heterodimer with protease CLIPB10; the interaction inhibits CLIPB10 catalytic activity. Interacts with CLIPB4 in the hemolymph of immune-challenged female mosquitoes; the interaction results in CLIPB4 inhibition. Protease CLIPB9 binds to SRPN2 via the hinge region resulting in the cleavage of the reactive bond. This leads to a conformational change in SRPN2 which traps CLIPB9 and distorts its active site, resulting in CLIPB9 inactivation.

It is found in the secreted. Its function is as follows. Serine protease inhibitor that functions in the melanization-mediated immune response. By preventing the activation of phenoloxidases through the inhibiting of serine proteases CLIPB9, CLIPB10 and CLIPB4, negatively regulates melanization in the hemolymph. By preventing melanization, has a detrimental role during P.berghei parasite mediated-infection and invasion of the mosquito midgut. The protein is Serine protease inhibitor 2 of Anopheles gambiae (African malaria mosquito).